Here is a 521-residue protein sequence, read N- to C-terminus: GMP synthase [glutamine-hydrolyzing] (521 aa).

Residues 5-203 (KILILDFGSQ…VHEICGCGRD (199 aa)) enclose the Glutamine amidotransferase type-1 domain. C82 serves as the catalytic Nucleophile. Residues H177 and E179 contribute to the active site. The GMPS ATP-PPase domain occupies 204 to 396 (WNMPDYVNEA…LGLPHEMVYR (193 aa)). 231-237 (SGGVDSS) is a binding site for ATP.

Homodimer.

It catalyses the reaction XMP + L-glutamine + ATP + H2O = GMP + L-glutamate + AMP + diphosphate + 2 H(+). Its pathway is purine metabolism; GMP biosynthesis; GMP from XMP (L-Gln route): step 1/1. Functionally, catalyzes the synthesis of GMP from XMP. The sequence is that of GMP synthase [glutamine-hydrolyzing] from Aromatoleum aromaticum (strain DSM 19018 / LMG 30748 / EbN1) (Azoarcus sp. (strain EbN1)).